Here is a 368-residue protein sequence, read N- to C-terminus: tRNA-specific 2-thiouridylase MnmA (368 aa).

Residues 12–19 (AMSGGVDS) and Met-38 each bind ATP. Cys-110 serves as the catalytic Nucleophile. A disulfide bridge links Cys-110 with Cys-207. Gly-134 provides a ligand contact to ATP. The segment at 157–159 (KDQ) is interaction with tRNA. Cys-207 (cysteine persulfide intermediate) is an active-site residue. The tract at residues 312-313 (RY) is interaction with tRNA.

It belongs to the MnmA/TRMU family.

The protein localises to the cytoplasm. It catalyses the reaction S-sulfanyl-L-cysteinyl-[protein] + uridine(34) in tRNA + AH2 + ATP = 2-thiouridine(34) in tRNA + L-cysteinyl-[protein] + A + AMP + diphosphate + H(+). Catalyzes the 2-thiolation of uridine at the wobble position (U34) of tRNA, leading to the formation of s(2)U34. This Geobacter metallireducens (strain ATCC 53774 / DSM 7210 / GS-15) protein is tRNA-specific 2-thiouridylase MnmA.